The following is a 166-amino-acid chain: Interferon gamma (166 aa).

Residues 1–23 form the signal peptide; it reads MKYTSYILAFQLCVVLGSLGCYC. A Pyrrolidone carboxylic acid modification is found at Gln-24. Residues Asn-48, Asn-86, and Asn-120 are each glycosylated (N-linked (GlcNAc...) asparagine).

It belongs to the type II (or gamma) interferon family. Homodimer. Interacts with IFNGR1 (via extracellular domain); this interaction promotes IFNGR1 dimerization. In terms of tissue distribution, released primarily from activated T lymphocytes.

It is found in the secreted. Its function is as follows. Type II interferon produced by immune cells such as T-cells and NK cells that plays crucial roles in antimicrobial, antiviral, and antitumor responses by activating effector immune cells and enhancing antigen presentation. Primarily signals through the JAK-STAT pathway after interaction with its receptor IFNGR1 to affect gene regulation. Upon IFNG binding, IFNGR1 intracellular domain opens out to allow association of downstream signaling components JAK2, JAK1 and STAT1, leading to STAT1 activation, nuclear translocation and transcription of IFNG-regulated genes. Many of the induced genes are transcription factors such as IRF1 that are able to further drive regulation of a next wave of transcription. Plays a role in class I antigen presentation pathway by inducing a replacement of catalytic proteasome subunits with immunoproteasome subunits. In turn, increases the quantity, quality, and repertoire of peptides for class I MHC loading. Increases the efficiency of peptide generation also by inducing the expression of activator PA28 that associates with the proteasome and alters its proteolytic cleavage preference. Up-regulates as well MHC II complexes on the cell surface by promoting expression of several key molecules such as cathepsins B/CTSB, H/CTSH, and L/CTSL. Participates in the regulation of hematopoietic stem cells during development and under homeostatic conditions by affecting their development, quiescence, and differentiation. In Callithrix jacchus (White-tufted-ear marmoset), this protein is Interferon gamma (IFNG).